The following is a 51-amino-acid chain: Mitochondrial import receptor subunit TOM5 homolog (51 aa).

Met-1 is modified (N-acetylmethionine). Lys-10 is covalently cross-linked (Glycyl lysine isopeptide (Lys-Gly) (interchain with G-Cter in SUMO2)). A helical membrane pass occupies residues 27–45 (SIRNFLIYVALLRVTPFIL).

The protein belongs to the Tom5 family. Forms part of the preprotein translocase complex of the outer mitochondrial membrane (TOM complex) which consists of at least 7 different proteins (TOMM5, TOMM6, TOMM7, TOMM20, TOMM22, TOMM40 and TOMM70).

It localises to the mitochondrion outer membrane. This Bos taurus (Bovine) protein is Mitochondrial import receptor subunit TOM5 homolog.